Consider the following 717-residue polypeptide: Probable cyclic nucleotide-gated ion channel 5 (717 aa).

Residues 1 to 102 (MAGKRENFVR…DKFLLYCNKL (102 aa)) lie on the Cytoplasmic side of the membrane. The chain crosses the membrane as a helical span at residues 103–123 (FVASCILSVFVDPFFFYLPVI). Residues 124-136 (NAESKCLGIDRKL) are Extracellular-facing. Residues 137 to 157 (AITASTLRTFIDVFYLAHMAL) form a helical membrane-spanning segment. Over 158–190 (QLRTAYIAPSSRVFGRGELVIDPAQIAKRYLQR) the chain is Cytoplasmic. Residues 191–211 (WFIIDFLSVLPLPQIVVWRFL) traverse the membrane as a helical segment. The Extracellular portion of the chain corresponds to 212–224 (QSSNGSDVLATKQ). A helical transmembrane segment spans residues 225–245 (ALLFIVLVQYIPRFLRVLPLT). Residues 246–265 (SELKRTAGVFAETAWAGAAY) lie on the Cytoplasmic side of the membrane. Residues 266–286 (YLLLYMLASHIVGAFWYLLAL) traverse the membrane as a helical segment. Residues 287–391 (ERNDACWQEA…GQGLETSTYP (105 aa)) are Extracellular-facing. The helical transmembrane segment at 392 to 412 (MEIIFSISLAISGLILFALLI) threads the bilayer. Residues 413-717 (GNMQTYLQSL…KPPEPDFTAD (305 aa)) lie on the Cytoplasmic side of the membrane. A nucleoside 3',5'-cyclic phosphate is bound by residues 498–628 (LFKS…TFRF) and Glu569. The segment at 614–629 (FRRLHSRQVQHTFRFY) is calmodulin-binding. Residues 634–663 (RTWAACFIQAAWRRYCKRKKMEEAEAEAAA) form the IQ domain.

The protein belongs to the cyclic nucleotide-gated cation channel (TC 1.A.1.5) family. In terms of assembly, homotetramer or heterotetramer.

The protein resides in the cell membrane. Its function is as follows. Probable cyclic nucleotide-gated ion channel. This is Probable cyclic nucleotide-gated ion channel 5 (CNGC5) from Arabidopsis thaliana (Mouse-ear cress).